A 634-amino-acid polypeptide reads, in one-letter code: NRPS-independent siderophore synthetase rfs (634 aa).

Its function is as follows. NRPS-independent siderophore synthetase that catalyzes the rhizoferrin biosynthesis from citrate and diaminobutane via an ATP-dependent condensation of citrate with diaminobutane followed by the addition of a second citrate to the monocitryl-diaminobutane intermediate. Can also use as substrates the citrate and diaminobutane homologs oxaloacetic acid, diaminopropane, diaminobutane, diaminopentane, tricarballylic acid, hydroxylamine and ornithine. Forms only a mono-substituted intermediate with oxaloacetic acid and diaminopentane whereas both mono-citryl intermediates and full rhizoferrin derivatives were detected when diaminopropane, and ornithine were used as substrates. Tricarballylic acid only forms a rhizoferrin derivative, but no mono-substituted intermediate. The polypeptide is NRPS-independent siderophore synthetase rfs (Rhizopus delemar (strain RA 99-880 / ATCC MYA-4621 / FGSC 9543 / NRRL 43880) (Mucormycosis agent)).